The chain runs to 444 residues: C4-dicarboxylate transport protein (444 aa).

8 helical membrane-spanning segments follow: residues 19–39, 55–75, 90–110, 161–181, 199–219, 230–250, 343–363, and 366–386; these read HLYF…HFYP, LVKM…IAGM, IYFL…SNIL, ILQV…VGDL, LVAI…AFTI, LAFL…VVLG, LLLV…AGFI, and AATL…ILGI.

This sequence belongs to the dicarboxylate/amino acid:cation symporter (DAACS) (TC 2.A.23) family.

It is found in the cell inner membrane. Responsible for the transport of dicarboxylates such as succinate, fumarate, and malate from the periplasm across the membrane. This Allorhizobium ampelinum (strain ATCC BAA-846 / DSM 112012 / S4) (Agrobacterium vitis (strain S4)) protein is C4-dicarboxylate transport protein.